Here is a 379-residue protein sequence, read N- to C-terminus: Synaptic vesicle membrane protein VAT-1 (379 aa).

Phosphoserine is present on Ser-273.

This sequence belongs to the zinc-containing alcohol dehydrogenase family. Quinone oxidoreductase subfamily. Cholinergic synaptic vesicles.

It localises to the cytoplasmic vesicle. The protein resides in the secretory vesicle. It is found in the synaptic vesicle membrane. Functionally, may play a central role in the functions mediated by specific classes of synaptic vesicles. This is Synaptic vesicle membrane protein VAT-1 from Tetronarce californica (Pacific electric ray).